Here is a 932-residue protein sequence, read N- to C-terminus: Protocadherin gamma-A6 (932 aa).

Positions 1-29 (MAPPQRHPQRSEQVLLLTLLGTLWGAAAA) are cleaved as a signal peptide. Cadherin domains lie at 30 to 133 (QIRY…TPRF), 134 to 242 (LKEE…TPMF), 243 to 347 (TQPV…VPEV), 348 to 452 (VVTS…PPTF), 453 to 562 (PHSS…APEI), and 570 to 682 (DGST…EPSA). The Extracellular segment spans residues 30–692 (QIRYSIPEEL…KPNDSDLTLY (663 aa)). Asn-81 carries N-linked (GlcNAc...) asparagine glycosylation. 2 N-linked (GlcNAc...) asparagine glycosylation sites follow: Asn-419 and Asn-545. The N-linked (GlcNAc...) asparagine glycan is linked to Asn-685. Residues 693–713 (LVVAVAAVSCVFLAFVIVLLA) traverse the membrane as a helical segment. The Cytoplasmic portion of the chain corresponds to 714–932 (LRLQRWHKSR…KKKSGKKEKK (219 aa)). 2 disordered regions span residues 804–841 (PRQLQQAPPNTDWRFSQAQRPGTSGSQNGDDTGTWPNN) and 902–932 (ATLTNAAGKRDGKAPAGGNGNKKKSGKKEKK). Positions 806-841 (QLQQAPPNTDWRFSQAQRPGTSGSQNGDDTGTWPNN) are enriched in polar residues. The segment covering 922–932 (NKKKSGKKEKK) has biased composition (basic residues).

It localises to the cell membrane. Functionally, potential calcium-dependent cell-adhesion protein. May be involved in the establishment and maintenance of specific neuronal connections in the brain. This chain is Protocadherin gamma-A6 (PCDHGA6), found in Homo sapiens (Human).